The sequence spans 157 residues: Transcriptional repressor NrdR (157 aa).

Residues 3–34 fold into a zinc finger; the sequence is CPFCGHMESQVKDSRPSEDGAAIRRRRLCPEC. The ATP-cone domain maps to 49 to 139; the sequence is LTIVKRSGRR…VYRDFRETSD (91 aa).

It belongs to the NrdR family. Requires Zn(2+) as cofactor.

Its function is as follows. Negatively regulates transcription of bacterial ribonucleotide reductase nrd genes and operons by binding to NrdR-boxes. In Caulobacter sp. (strain K31), this protein is Transcriptional repressor NrdR.